A 184-amino-acid polypeptide reads, in one-letter code: Peptidyl-tRNA hydrolase (184 aa).

Tyrosine 14 serves as a coordination point for tRNA. Residue histidine 19 is the Proton acceptor of the active site. 2 residues coordinate tRNA: phenylalanine 60 and asparagine 62.

The protein belongs to the PTH family. Monomer.

Its subcellular location is the cytoplasm. It carries out the reaction an N-acyl-L-alpha-aminoacyl-tRNA + H2O = an N-acyl-L-amino acid + a tRNA + H(+). Functionally, hydrolyzes ribosome-free peptidyl-tRNAs (with 1 or more amino acids incorporated), which drop off the ribosome during protein synthesis, or as a result of ribosome stalling. In terms of biological role, catalyzes the release of premature peptidyl moieties from peptidyl-tRNA molecules trapped in stalled 50S ribosomal subunits, and thus maintains levels of free tRNAs and 50S ribosomes. This Mesomycoplasma hyopneumoniae (strain 232) (Mycoplasma hyopneumoniae) protein is Peptidyl-tRNA hydrolase.